A 130-amino-acid polypeptide reads, in one-letter code: Large ribosomal subunit protein bL12 (130 aa).

It belongs to the bacterial ribosomal protein bL12 family. As to quaternary structure, homodimer. Part of the ribosomal stalk of the 50S ribosomal subunit. Forms a multimeric L10(L12)X complex, where L10 forms an elongated spine to which 2 to 4 L12 dimers bind in a sequential fashion. Binds GTP-bound translation factors.

Its function is as follows. Forms part of the ribosomal stalk which helps the ribosome interact with GTP-bound translation factors. Is thus essential for accurate translation. This Prochlorococcus marinus (strain SARG / CCMP1375 / SS120) protein is Large ribosomal subunit protein bL12.